Reading from the N-terminus, the 181-residue chain is 30 kDa heat shock protein (181 aa).

In terms of domain architecture, sHSP spans 33–181 (ASVQSFAPRF…PPTAKKITIQ (149 aa)). Residues 79–115 (GRSEREYHSSSDDNKNDQADTENQARGESSEVAKTGE) show a composition bias toward basic and acidic residues. The disordered stretch occupies residues 79–127 (GRSEREYHSSSDDNKNDQADTENQARGESSEVAKTGEKQVSTKKAANKS).

The protein belongs to the small heat shock protein (HSP20) family.

This is 30 kDa heat shock protein (hsp30) from Emericella nidulans (strain FGSC A4 / ATCC 38163 / CBS 112.46 / NRRL 194 / M139) (Aspergillus nidulans).